A 250-amino-acid polypeptide reads, in one-letter code: Zinc finger protein lsy-27 (250 aa).

C2H2-type zinc fingers lie at residues 25–48 and 52–75; these read FVCS…QLMH and HTCM…RNEH. Residues 81–104 form a C2H2-type 3; degenerate zinc finger; that stretch reads FTCGCCNWTFASKRQLTEHTKCIQ. Disordered regions lie at residues 126 to 177 and 226 to 250; these read IQST…EAER and QKVK…QEIE. Residues 148 to 165 show a composition bias toward low complexity; sequence SLSPSSSVSTSISSRDAS. Basic and acidic residues predominate over residues 239 to 250; sequence MIPEKHVKQEIE.

Involved in regulating left/right asymmetric differentiation of the gustatory ASE neurons. Plays a role in modulating expression of LIM/homeobox protein lim-6. The sequence is that of Zinc finger protein lsy-27 from Caenorhabditis elegans.